Reading from the N-terminus, the 518-residue chain is Pumilio homolog 14 (518 aa).

2 disordered regions span residues 26–46 (TMASSSSQPQPISSPFHQPEN) and 77–114 (VGQNGDSIHLPRRTNQVFTGSSSGGAGDDNGYLLPPMG). Over residues 29-44 (SSSSQPQPISSPFHQP) the composition is skewed to low complexity. The PUM-HD domain occupies 178 to 518 (YTNRFGYEGY…GNKVLEKLNI (341 aa)). Residues 206-235 (SAFAKDKEMSERLGMSIFQGTKETVDAIYN) form a Pumilio 1; degenerate repeat. 7 Pumilio repeats span residues 236-271 (GLIGDICELMVDPYGSDVVQLLMRRCSSEQIVQLVD), 275-313 (QQMFQFVNICIDSLGTNAIQVLLTCINERAKDQIPRIVD), 314-348 (VVRTVALQLSKSNHAIFVILACFRLFPLHCRLLLE), 349-387 (LIVQNCHQIAIDQHGCCLLQLCFNKDRVPNLEIRQRLIM), 388-423 (EAIANALRLCLNCYGNYVVQYIVELNNRYLIDALVR), 424-459 (QLIGNYAHLARNKYGSHAVQKLLKLRWIDSRVIVID), and 460-494 (LLREIDTLLLDPFGNYVIQTAWFVSKDDVRRMLRY).

It is found in the cytoplasm. The protein resides in the nucleus. Sequence-specific RNA-binding protein that regulates translation and mRNA stability by binding the 3'-UTR of target mRNAs. The protein is Pumilio homolog 14 (APUM14) of Arabidopsis thaliana (Mouse-ear cress).